The primary structure comprises 390 residues: (S)-8-oxocitronellyl enol synthase CYC2 (390 aa).

Residues 35–37, 63–64, 81–82, 105–106, and Gln143 contribute to the NADP(+) site; these read TGI, RR, DI, and TW. Catalysis depends on residues Lys147 and Tyr179. Lys147 and Tyr179 together coordinate substrate. NADP(+) is bound by residues Tyr179 and 213–215; that span reads SMM.

This sequence belongs to the short-chain dehydrogenases/reductases (SDR) family. Highly divergent.

The enzyme catalyses (S)-8-oxocitronellyl enol + NADP(+) = (6E)-8-oxogeranial + NADPH + H(+). It catalyses the reaction (S)-8-oxocitronellyl enol + NAD(+) = (6E)-8-oxogeranial + NADH + H(+). In terms of biological role, iridoid synthase that catalyzes the first step in generation of the iridoid ring scaffold using the linear monoterpene (6E)-8-oxogeranial as substrate. Iridoids comprise a large family of distinctive bicyclic monoterpenes that possess a wide range of pharmacological activities, including anticancer, anti-inflammatory, antifungal and antibacterial activities. The protein is (S)-8-oxocitronellyl enol synthase CYC2 of Camptotheca acuminata (Happy tree).